The following is a 238-amino-acid chain: Probable transcriptional regulatory protein VPA0011 (238 aa).

It belongs to the TACO1 family.

The protein localises to the cytoplasm. The protein is Probable transcriptional regulatory protein VPA0011 of Vibrio parahaemolyticus serotype O3:K6 (strain RIMD 2210633).